We begin with the raw amino-acid sequence, 263 residues long: Mediator of RNA polymerase II transcription subunit 6 (263 aa).

The span at 163–181 (IHQSTSNPTQGQSSGKSIS) shows a compositional bias: polar residues. The segment at 163–232 (IHQSTSNPTQ…NGSTSSAESA (70 aa)) is disordered. Residues 182–202 (ATVGNTGTTATPMTMQTPQTV) show a composition bias toward low complexity.

The protein belongs to the Mediator complex subunit 6 family. In terms of assembly, component of the Mediator complex.

Its subcellular location is the nucleus. Functionally, component of the Mediator complex, a coactivator involved in the regulated transcription of nearly all RNA polymerase II-dependent genes. Mediator functions as a bridge to convey information from gene-specific regulatory proteins to the basal RNA polymerase II transcription machinery. Mediator is recruited to promoters by direct interactions with regulatory proteins and serves as a scaffold for the assembly of a functional preinitiation complex with RNA polymerase II and the general transcription factors. This is Mediator of RNA polymerase II transcription subunit 6 (MED6) from Scheffersomyces stipitis (strain ATCC 58785 / CBS 6054 / NBRC 10063 / NRRL Y-11545) (Yeast).